Reading from the N-terminus, the 278-residue chain is Tumor necrosis factor ligand superfamily member 6 (278 aa).

Residues 1–77 (MQQPVNYPCP…SPLKKKDNIE (77 aa)) are Cytoplasmic-facing. A disordered region spans residues 26-68 (PGSVFSCPSSGPRGPGQRRPPPPPPPPSPLPPPSQPPPLPPLS). Over residues 33 to 42 (PSSGPRGPGQ) the composition is skewed to low complexity. The span at 43–68 (RRPPPPPPPPSPLPPPSQPPPLPPLS) shows a compositional bias: pro residues. A helical; Signal-anchor for type II membrane protein transmembrane segment spans residues 78–99 (LWLPVIFFMVLVALVGMGLGMY). Residues 100 to 278 (QLFHLQKELA…SKTFFGLYKL (179 aa)) are Extracellular-facing. The N-linked (GlcNAc...) asparagine glycan is linked to Asn116. Residues 125–135 (EKQIANPSTPS) are compositionally biased toward polar residues. A disordered region spans residues 125-147 (EKQIANPSTPSETKKPRSVAHLT). The region spanning 142-278 (SVAHLTGNPR…SKTFFGLYKL (137 aa)) is the THD domain. Cys199 and Cys230 are oxidised to a cystine. N-linked (GlcNAc...) asparagine glycosylation is found at Asn247 and Asn257.

Belongs to the tumor necrosis factor family. In terms of assembly, homotrimer. Interacts with ARHGAP9, BAIAP2L1, BTK, CACNB3, CACNB4, CRK, DLG2, DNMBP, DOCK4, EPS8L3, FGR, FYB1, FYN, HCK, ITK, ITSN2, KALRN, LYN, MACC1, MIA, MPP4, MYO15A, NCF1, NCK1, NCK2, NCKIPSD, OSTF1, PIK3R1, PSTPIP1, RIMBP3C, SAMSN1, SH3GL3, SH3PXD2B, SH3PXD2A, SH3RF2, SKAP2, SNX33, SNX9, SORBS3, SPTA1, SRC, SRGAP1, SRGAP2, SRGAP3, TEC, TJP3 and YES1. Post-translationally, the soluble form derives from the membrane form by proteolytic processing. The membrane-bound form undergoes two successive intramembrane proteolytic cleavages. The first one is processed by ADAM10 producing an N-terminal fragment, which lacks the receptor-binding extracellular domain. This ADAM10-processed FasL (FasL APL) remnant form is still membrane anchored and further processed by SPPL2A that liberates the FasL intracellular domain (FasL ICD). FasL shedding by ADAM10 is a prerequisite for subsequent intramembrane cleavage by SPPL2A in T-cells. In terms of processing, phosphorylated by FGR on tyrosine residues; this is required for ubiquitination and subsequent internalization. N-glycosylated. Post-translationally, monoubiquitinated. In terms of tissue distribution, expressed in activated splenocytes and thymocytes. Moderate or weak expression found in small intestines, kidney and lung.

The protein resides in the cell membrane. It localises to the cytoplasmic vesicle lumen. Its subcellular location is the lysosome lumen. It is found in the secreted. The protein localises to the nucleus. Cytokine that binds to TNFRSF6/FAS, a receptor that transduces the apoptotic signal into cells. Involved in cytotoxic T-cell-mediated apoptosis, natural killer cell-mediated apoptosis and in T-cell development. Initiates fratricidal/suicidal activation-induced cell death (AICD) in antigen-activated T-cells contributing to the termination of immune responses. TNFRSF6/FAS-mediated apoptosis also has a role in the induction of peripheral tolerance. Binds to TNFRSF6B/DcR3, a decoy receptor that blocks apoptosis. In terms of biological role, induces FAS-mediated activation of NF-kappa-B, initiating non-apoptotic signaling pathways. Can induce apoptosis but does not appear to be essential for this process. Functionally, cytoplasmic form induces gene transcription inhibition. The protein is Tumor necrosis factor ligand superfamily member 6 (Faslg) of Rattus norvegicus (Rat).